We begin with the raw amino-acid sequence, 127 residues long: Small ribosomal subunit protein uS12 (127 aa).

Residue Asp-89 is modified to 3-methylthioaspartic acid.

This sequence belongs to the universal ribosomal protein uS12 family. Part of the 30S ribosomal subunit. Contacts proteins S8 and S17. May interact with IF1 in the 30S initiation complex.

Functionally, with S4 and S5 plays an important role in translational accuracy. Its function is as follows. Interacts with and stabilizes bases of the 16S rRNA that are involved in tRNA selection in the A site and with the mRNA backbone. Located at the interface of the 30S and 50S subunits, it traverses the body of the 30S subunit contacting proteins on the other side and probably holding the rRNA structure together. The combined cluster of proteins S8, S12 and S17 appears to hold together the shoulder and platform of the 30S subunit. The sequence is that of Small ribosomal subunit protein uS12 from Nautilia profundicola (strain ATCC BAA-1463 / DSM 18972 / AmH).